The sequence spans 83 residues: U20-theraphotoxin-Cg1a 1 (83 aa).

The first 21 residues, 1–21, serve as a signal peptide directing secretion; that stretch reads MKVSVLITLAVLGVMFVWTSA. Residues 22–47 constitute a propeptide that is removed on maturation; the sequence is AELEERGSDQPAWLKSLERIFQSEER. Intrachain disulfides connect cysteine 49–cysteine 63, cysteine 56–cysteine 68, and cysteine 62–cysteine 76.

Belongs to the neurotoxin 10 (Hwtx-1) family. 40 (Jztx-35) subfamily. In terms of tissue distribution, expressed by the venom gland.

It localises to the secreted. Functionally, probable ion channel inhibitor. The sequence is that of U20-theraphotoxin-Cg1a 1 from Chilobrachys guangxiensis (Chinese earth tiger tarantula).